An 89-amino-acid chain; its full sequence is Small ribosomal subunit protein uS15 (89 aa).

Residues 1–21 (MAITQERKNQLISEFKTHESD) are compositionally biased toward basic and acidic residues. Positions 1–23 (MAITQERKNQLISEFKTHESDTG) are disordered.

This sequence belongs to the universal ribosomal protein uS15 family. Part of the 30S ribosomal subunit. Forms a bridge to the 50S subunit in the 70S ribosome, contacting the 23S rRNA.

One of the primary rRNA binding proteins, it binds directly to 16S rRNA where it helps nucleate assembly of the platform of the 30S subunit by binding and bridging several RNA helices of the 16S rRNA. Functionally, forms an intersubunit bridge (bridge B4) with the 23S rRNA of the 50S subunit in the ribosome. This Bacillus velezensis (strain DSM 23117 / BGSC 10A6 / LMG 26770 / FZB42) (Bacillus amyloliquefaciens subsp. plantarum) protein is Small ribosomal subunit protein uS15.